A 710-amino-acid chain; its full sequence is Aminopeptidase P2 (710 aa).

Residues 1-79 (MIPLTLSSPS…IRKAQTKVVV (79 aa)) constitute a chloroplast transit peptide. Residues Arg147 and His486 each contribute to the a peptide site. Residues Asp506, Asp517, and His580 each coordinate Mn(2+). The a peptide site is built by His580, His589, and Glu614. Positions 614 and 628 each coordinate Mn(2+).

Belongs to the peptidase M24B family. Homodimer. It depends on Mn(2+) as a cofactor.

It is found in the plastid. The protein localises to the chloroplast. It catalyses the reaction Release of any N-terminal amino acid, including proline, that is linked to proline, even from a dipeptide or tripeptide.. Functionally, catalyzes the removal of a penultimate prolyl residue from the N-termini of peptides, such as Arg-Pro-Pro. The protein is Aminopeptidase P2 of Arabidopsis thaliana (Mouse-ear cress).